Consider the following 105-residue polypeptide: Plastocyanin (105 aa).

The Plastocyanin-like domain occupies 1–105 (ETYTVKLGSD…GMVGKITVAG (105 aa)). The Cu(2+) site is built by histidine 39, cysteine 89, histidine 92, and methionine 97.

This sequence belongs to the plastocyanin family. Requires Cu(2+) as cofactor.

It is found in the cellular thylakoid membrane. Participates in electron transfer between P700 and the cytochrome b6-f complex in photosystem I. The protein is Plastocyanin (petE) of Anabaena variabilis.